Here is a 539-residue protein sequence, read N- to C-terminus: Putative cysteine ligase BshC (539 aa).

A coiled-coil region spans residues 249-270; the sequence is VETNDEVTNRLNESQAAMKRAG.

Belongs to the BshC family.

Functionally, involved in bacillithiol (BSH) biosynthesis. May catalyze the last step of the pathway, the addition of cysteine to glucosamine malate (GlcN-Mal) to generate BSH. The sequence is that of Putative cysteine ligase BshC from Bacillus pumilus (strain SAFR-032).